We begin with the raw amino-acid sequence, 651 residues long: Intraflagellar transport protein 70A (651 aa).

TPR repeat units follow at residues 8 to 41 (DGEYTATVYKMIKEGRYGDAIHILSKEHQKHTKS), 42 to 75 (RAALSLLGYCYYHMQDFTNAAECYEQLTQLHPEV), 140 to 173 (PDYDVDLGCLLYKEGEFEEACKKFMSSMNVLGYQ), 175 to 207 (DLAYNIALCYYSLKQYASALKYIAEIIERGIRE), 379 to 410 (VTKQVQEARHNRDDESLKKYVQDYDEVLEKYI), 411 to 443 (PVLMAQAKIYWNRENYSMVEKIFHKSLEFCNEH), and 445 to 478 (TWKLNVAHVLFMQDNKYKEAIGFYEPIVKKHYEN). The stretch at 494 to 521 (YIMTSQNEEAEELMRKIEKEEEQISYDD) forms a coiled coil. The TPR 8 repeat unit spans residues 530–563 (CIVNLVIGTLYCAKGNYDFGISRVIKSLEPYNKK).

It belongs to the TTC30/dfy-1/fleer family. Localizes to the cilia of many ciliated epithelial cell types including pronephric cells, olfactory placode, the brain ventricle and lateral line organs.

Its subcellular location is the cell projection. It localises to the cilium. In terms of biological role, plays a role in anterograde intraflagellar transport (IFT), the process by which cilia precursors are transported from the base of the cilium to the site of their incorporation at the tip. Required for polyglutamylation of axonemal tubulin, which is a prerequisite for correct assembly of cilia and for normal cilia beat amplitude. Does not seem to be required for neuronal microtubule polyglutamylation. This Danio rerio (Zebrafish) protein is Intraflagellar transport protein 70A (ift70a).